A 500-amino-acid polypeptide reads, in one-letter code: Lysine--tRNA ligase (500 aa).

Glu-410 and Glu-417 together coordinate Mg(2+).

This sequence belongs to the class-II aminoacyl-tRNA synthetase family. Homodimer. Mg(2+) is required as a cofactor.

Its subcellular location is the cytoplasm. The catalysed reaction is tRNA(Lys) + L-lysine + ATP = L-lysyl-tRNA(Lys) + AMP + diphosphate. The chain is Lysine--tRNA ligase from Shewanella oneidensis (strain ATCC 700550 / JCM 31522 / CIP 106686 / LMG 19005 / NCIMB 14063 / MR-1).